The chain runs to 253 residues: MRIGIFDSGVGGITVLKEALNLLPGEDYIYYADTANVPYGTKDKNEVRQYIFKAVEFLINRGIEALVVACNTATSIAIKDLRETYQFPIVGMEPAVKPAVERSRNKKVLVLATPLTIREEKFRNLVSRVKAEDIVDSLGLPGLVEYAEGFVFDENIIIPYLKDRLSPFNLQEYGTLVLGCTHFLYFRDIFNKIIPDHIDIIDGNKGTVRHLKNLLLQSGFKTGSEGSGEIIFYSSGKKDERRLKKYLDILKEI.

Substrate-binding positions include 7 to 8 (DS) and 39 to 40 (YG). The active-site Proton donor/acceptor is Cys70. 71-72 (NT) contributes to the substrate binding site. The Proton donor/acceptor role is filled by Cys180. 181-182 (TH) serves as a coordination point for substrate.

This sequence belongs to the aspartate/glutamate racemases family.

It carries out the reaction L-glutamate = D-glutamate. Its pathway is cell wall biogenesis; peptidoglycan biosynthesis. Its function is as follows. Provides the (R)-glutamate required for cell wall biosynthesis. This Halothermothrix orenii (strain H 168 / OCM 544 / DSM 9562) protein is Glutamate racemase.